The primary structure comprises 87 residues: Phytosulfokines 1 (87 aa).

The first 24 residues, 1-24, serve as a signal peptide directing secretion; the sequence is MMKTKSEVLIFFFTLVLLLSMASS. Residues 25-76 constitute a propeptide that is removed on maturation; sequence VILREDGFAPPKPSPTTHEKASTKGDRDGVECKNSDSEEECLVKKTVAAHTD. Positions 31-59 are disordered; that stretch reads GFAPPKPSPTTHEKASTKGDRDGVECKNS. The span at 41–59 shows a compositional bias: basic and acidic residues; that stretch reads THEKASTKGDRDGVECKNS. Sulfotyrosine occurs at positions 77 and 79. Positions 82-87 are excised as a propeptide; sequence DLNLSP.

This sequence belongs to the phytosulfokine family. In terms of processing, sulfation is important for activity and for the binding to a putative membrane receptor. Post-translationally, PSK-beta is produced from PSK-alpha by exopeptidase digestion. Expressed only in roots.

Its subcellular location is the secreted. Promotes plant cell differentiation, organogenesis and somatic embryogenesis as well as cell proliferation. The chain is Phytosulfokines 1 (PSK1) from Arabidopsis thaliana (Mouse-ear cress).